The sequence spans 116 residues: Large ribosomal subunit protein uL18 (116 aa).

Belongs to the universal ribosomal protein uL18 family. Part of the 50S ribosomal subunit; part of the 5S rRNA/L5/L18/L25 subcomplex. Contacts the 5S and 23S rRNAs.

This is one of the proteins that bind and probably mediate the attachment of the 5S RNA into the large ribosomal subunit, where it forms part of the central protuberance. The sequence is that of Large ribosomal subunit protein uL18 from Mycoplasma mycoides subsp. mycoides SC (strain CCUG 32753 / NCTC 10114 / PG1).